Reading from the N-terminus, the 456-residue chain is uncharacterized protein (456 aa).

The 59-residue stretch at 3–61 (LMRKNETREFLIEDIEFPAVGVAFYNDKKVYIKGAVPGQKVLARVSKVRREKIEAKLKE) folds into the TRAM domain. [4Fe-4S] cluster-binding residues include Cys74, Cys80, Cys83, and Cys163. Gln289, Tyr318, Glu339, and Asp384 together coordinate S-adenosyl-L-methionine. Residue Cys411 is the Nucleophile of the active site.

It belongs to the class I-like SAM-binding methyltransferase superfamily. RNA M5U methyltransferase family.

This is an uncharacterized protein from Clostridium acetobutylicum (strain ATCC 824 / DSM 792 / JCM 1419 / IAM 19013 / LMG 5710 / NBRC 13948 / NRRL B-527 / VKM B-1787 / 2291 / W).